A 373-amino-acid chain; its full sequence is NAD-dependent protein deacetylase SIR2rp1 (373 aa).

In terms of domain architecture, Deacetylase sirtuin-type spans 12 to 349 (HALGEPTVEG…LKLAECLGLR (338 aa)). NAD(+)-binding positions include 39–59 (GAGA…TGIY) and 124–127 (QNID). H144 functions as the Proton acceptor in the catalytic mechanism. 4 residues coordinate Zn(2+): C152, C155, C176, and C179. Residues 216–218 (GTS) and 241–243 (NRE) contribute to the NAD(+) site. The interval 263–313 (DAVAKEGRSSSSQSRSPSASARREEGGTEDGSSSPNEEVEDASTSSSSDGY) is disordered. The segment covering 271–282 (SSSSQSRSPSAS) has biased composition (low complexity). C335 is a binding site for NAD(+).

The protein belongs to the sirtuin family. Class I subfamily. Zn(2+) serves as cofactor.

Its subcellular location is the nucleus. It catalyses the reaction N(6)-acetyl-L-lysyl-[protein] + NAD(+) + H2O = 2''-O-acetyl-ADP-D-ribose + nicotinamide + L-lysyl-[protein]. Functionally, NAD-dependent deacetylase, which probably acts as a regulator of gene expression believed to help form modified chromatin structures on the genes it regulates. The sequence is that of NAD-dependent protein deacetylase SIR2rp1 (SIR2rp1) from Leishmania major.